The chain runs to 156 residues: MISILQRVKQARVEIDGQVAGSIGPGLLALVCAERGDTEAEADKLLAKMLKLRIFADDAGKMNRSVQDLDGQGACGGLLIVSQFTLAADTGGGNRPSFTRAAPPAEGERLYDYIVQRARALHPEVATGRFGADMQVHLLNDGPVTIPLSIAPATAA.

A Gly-cisPro motif, important for rejection of L-amino acids motif is present at residues 142–143; it reads GP.

The protein belongs to the DTD family. In terms of assembly, homodimer.

Its subcellular location is the cytoplasm. The enzyme catalyses glycyl-tRNA(Ala) + H2O = tRNA(Ala) + glycine + H(+). It carries out the reaction a D-aminoacyl-tRNA + H2O = a tRNA + a D-alpha-amino acid + H(+). Its function is as follows. An aminoacyl-tRNA editing enzyme that deacylates mischarged D-aminoacyl-tRNAs. Also deacylates mischarged glycyl-tRNA(Ala), protecting cells against glycine mischarging by AlaRS. Acts via tRNA-based rather than protein-based catalysis; rejects L-amino acids rather than detecting D-amino acids in the active site. By recycling D-aminoacyl-tRNA to D-amino acids and free tRNA molecules, this enzyme counteracts the toxicity associated with the formation of D-aminoacyl-tRNA entities in vivo and helps enforce protein L-homochirality. This chain is D-aminoacyl-tRNA deacylase, found in Delftia acidovorans (strain DSM 14801 / SPH-1).